Reading from the N-terminus, the 280-residue chain is 2-dehydro-3-deoxyphosphooctonate aldolase (280 aa).

The protein belongs to the KdsA family.

The protein resides in the cytoplasm. The catalysed reaction is D-arabinose 5-phosphate + phosphoenolpyruvate + H2O = 3-deoxy-alpha-D-manno-2-octulosonate-8-phosphate + phosphate. Its pathway is carbohydrate biosynthesis; 3-deoxy-D-manno-octulosonate biosynthesis; 3-deoxy-D-manno-octulosonate from D-ribulose 5-phosphate: step 2/3. It participates in bacterial outer membrane biogenesis; lipopolysaccharide biosynthesis. The sequence is that of 2-dehydro-3-deoxyphosphooctonate aldolase from Coxiella burnetii (strain CbuG_Q212) (Coxiella burnetii (strain Q212)).